Reading from the N-terminus, the 382-residue chain is Protein-arginine rhamnosyltransferase (382 aa).

18–19 (FG) is a binding site for dTDP. The active-site Proton acceptor is the Asp20. DTDP-beta-L-rhamnose-binding positions include Asp20, Tyr187, 250-252 (VPQ), and 268-272 (RGEDS). DTDP contacts are provided by residues Tyr187, 250–252 (VPQ), and 268–272 (RGEDS). Glu270 is an active-site residue.

The protein belongs to the glycosyltransferase 104 family.

The enzyme catalyses dTDP-beta-L-rhamnose + L-arginyl-[protein] = N(omega)-(alpha-L-rhamnosyl)-L-arginyl-[protein] + dTDP + H(+). Functionally, protein-arginine rhamnosyltransferase that catalyzes the transfer of a single rhamnose to elongation factor P (EF-P) on 'Lys-32', a modification required for EF-P-dependent rescue of polyproline stalled ribosomes. The polypeptide is Protein-arginine rhamnosyltransferase (Neisseria meningitidis serogroup B / serotype 15 (strain H44/76)).